Reading from the N-terminus, the 369-residue chain is Aminomethyltransferase (369 aa).

It belongs to the GcvT family. The glycine cleavage system is composed of four proteins: P, T, L and H.

The catalysed reaction is N(6)-[(R)-S(8)-aminomethyldihydrolipoyl]-L-lysyl-[protein] + (6S)-5,6,7,8-tetrahydrofolate = N(6)-[(R)-dihydrolipoyl]-L-lysyl-[protein] + (6R)-5,10-methylene-5,6,7,8-tetrahydrofolate + NH4(+). Its function is as follows. The glycine cleavage system catalyzes the degradation of glycine. The protein is Aminomethyltransferase of Xanthomonas euvesicatoria pv. vesicatoria (strain 85-10) (Xanthomonas campestris pv. vesicatoria).